We begin with the raw amino-acid sequence, 435 residues long: Endoglucanase EG-1 (435 aa).

Positions 1 to 20 (MARGTALLGLTSLLLGLVNG) are cleaved as a signal peptide. Residue Gln-21 is modified to Pyrrolidone carboxylic acid. Disulfide bonds link Cys-38–Cys-44, Cys-71–Cys-93, and Cys-83–Cys-89. N-linked (GlcNAc...) asparagine glycosylation occurs at Asn-109. Intrachain disulfides connect Cys-160–Cys-385, Cys-192–Cys-215, Cys-196–Cys-214, Cys-235–Cys-254, Cys-243–Cys-248, and Cys-259–Cys-335. The active-site Nucleophile is Glu-217. The active-site Proton donor is Glu-222. Residue Asn-267 is glycosylated (N-linked (GlcNAc...) asparagine).

It belongs to the glycosyl hydrolase 7 (cellulase C) family.

The protein resides in the secreted. It carries out the reaction Endohydrolysis of (1-&gt;4)-beta-D-glucosidic linkages in cellulose, lichenin and cereal beta-D-glucans.. Its function is as follows. The biological conversion of cellulose to glucose generally requires three types of hydrolytic enzymes: (1) Endoglucanases which cut internal beta-1,4-glucosidic bonds; (2) Exocellobiohydrolases that cut the disaccharide cellobiose from the non-reducing end of the cellulose polymer chain; (3) Beta-1,4-glucosidases which hydrolyze the cellobiose and other short cello-oligosaccharides to glucose. The protein is Endoglucanase EG-1 (EG-1) of Humicola insolens (Soft-rot fungus).